The sequence spans 210 residues: Glutathione S-transferase P (210 aa).

A GST N-terminal domain is found at 2–81 (PPYTVVYFPV…HLGRTLGLYG (80 aa)). A Phosphotyrosine; by EGFR modification is found at Y4. Glutathione contacts are provided by residues Y8, R14, W39, K45, and 52–53 (QL). T62 bears the Phosphothreonine mark. Residue 65-66 (QS) coordinates glutathione. In terms of domain architecture, GST C-terminal spans 83 to 204 (DQQEAALVDM…ASPEYVNLPI (122 aa)). K103 and K116 each carry N6-succinyllysine. N6-acetyllysine is present on K128. Phosphotyrosine; by EGFR is present on Y199.

It belongs to the GST superfamily. Pi family. As to quaternary structure, homodimer. Interacts with CDK5.

It localises to the cytoplasm. The protein localises to the mitochondrion. It is found in the nucleus. The catalysed reaction is RX + glutathione = an S-substituted glutathione + a halide anion + H(+). It catalyses the reaction prostaglandin J2 + glutathione = prostaglandin J2-S-(R)-glutathione. The enzyme catalyses prostaglandin J2 + glutathione = prostaglandin J2-S-(S)-glutathione. It carries out the reaction prostaglandin A2 + glutathione = prostaglandin A2-S-(S)-glutathione. The catalysed reaction is 11(S)-hydroxy-14(S),15(S)-epoxy-(5Z,8Z,12E)-eicosatrienoate + glutathione = (11S,15S)-dihydroxy-14(R)-S-glutathionyl-(5Z,8Z,12E)-eicosatrienoate. In terms of biological role, conjugation of reduced glutathione to a wide number of exogenous and endogenous hydrophobic electrophiles. Involved in the formation of glutathione conjugates of both prostaglandin A2 (PGA2) and prostaglandin J2 (PGJ2). Participates in the formation of novel hepoxilin regioisomers. Negatively regulates CDK5 activity via p25/p35 translocation to prevent neurodegeneration. In Homo sapiens (Human), this protein is Glutathione S-transferase P.